The following is a 248-amino-acid chain: Small ribosomal subunit protein uS3 (248 aa).

Residues 38–106 (IREFLSKGLD…QVALNILEVK (69 aa)) enclose the KH type-2 domain. A compositionally biased stretch (basic and acidic residues) spans 214 to 230 (SEINAPAERRGRGDRNA). Positions 214–248 (SEINAPAERRGRGDRNARPRRGGQRRQRAEQKQEG) are disordered.

Belongs to the universal ribosomal protein uS3 family. As to quaternary structure, part of the 30S ribosomal subunit. Forms a tight complex with proteins S10 and S14.

Binds the lower part of the 30S subunit head. Binds mRNA in the 70S ribosome, positioning it for translation. This chain is Small ribosomal subunit protein uS3, found in Corynebacterium glutamicum (strain R).